Here is a 368-residue protein sequence, read N- to C-terminus: Isocitrate dehydrogenase [NAD] regulatory subunit 3, mitochondrial (368 aa).

The N-terminal 26 residues, 1–26 (MARRSVSIFNRLLANPPSPFTSLSRS), are a transit peptide targeting the mitochondrion.

It belongs to the isocitrate and isopropylmalate dehydrogenases family. Heterooligomer of catalytic and regulatory subunits. Interacts with 14-3-3-like proteins GRF1 GRF3 and GRF8. As to expression, mainly expressed at a low level in pollen.

The protein localises to the mitochondrion. In terms of biological role, performs an essential role in the oxidative function of the citric acid cycle. This is Isocitrate dehydrogenase [NAD] regulatory subunit 3, mitochondrial (IDH3) from Arabidopsis thaliana (Mouse-ear cress).